Here is a 237-residue protein sequence, read N- to C-terminus: Methylosome subunit pICln (237 aa).

Ser-2 bears the N-acetylserine mark. Phosphoserine is present on residues Ser-102, Ser-144, Ser-193, Ser-195, Ser-198, and Ser-210. Residues 135–159 (LHPDPEDEDSDDYDGEEYDVEAHEQ) are disordered. The span at 139–153 (PEDEDSDDYDGEEYD) shows a compositional bias: acidic residues. Thr-223 bears the Phosphothreonine mark.

Belongs to the pICln (TC 1.A.47) family. Component of the methylosome, a 20S complex containing at least PRMT5/SKB1, WDR77/MEP50 and CLNS1A/pICln. May mediate SNRPD1 and SNRPD3 methylation. Forms a 6S pICln-Sm complex composed of CLNS1A/pICln, SNRPD1, SNRPD2, SNRPE, SNRPF and SNRPG; ring-like structure where CLNS1A/pICln mimics additional Sm proteins and which is unable to assemble into the core snRNP. Interacts with LSM10 and LSM11.

It localises to the cytoplasm. The protein resides in the cytosol. Its subcellular location is the nucleus. It is found in the cytoskeleton. Its function is as follows. Involved in both the assembly of spliceosomal snRNPs and the methylation of Sm proteins. Chaperone that regulates the assembly of spliceosomal U1, U2, U4 and U5 small nuclear ribonucleoproteins (snRNPs), the building blocks of the spliceosome, and thereby plays an important role in the splicing of cellular pre-mRNAs. Most spliceosomal snRNPs contain a common set of Sm proteins SNRPB, SNRPD1, SNRPD2, SNRPD3, SNRPE, SNRPF and SNRPG that assemble in a heptameric protein ring on the Sm site of the small nuclear RNA to form the core snRNP (Sm core). In the cytosol, the Sm proteins SNRPD1, SNRPD2, SNRPE, SNRPF and SNRPG are trapped in an inactive 6S pICln-Sm complex by the chaperone CLNS1A that controls the assembly of the core snRNP. Dissociation by the SMN complex of CLNS1A from the trapped Sm proteins and their transfer to an SMN-Sm complex triggers the assembly of core snRNPs and their transport to the nucleus. The sequence is that of Methylosome subunit pICln (CLNS1A) from Homo sapiens (Human).